The following is a 333-amino-acid chain: Mycothiol acetyltransferase (333 aa).

N-acetyltransferase domains lie at 18 to 170 and 176 to 333; these read PTLS…LPEP and VTVR…AAAD. Residue Glu46 participates in 1D-myo-inositol 2-(L-cysteinylamino)-2-deoxy-alpha-D-glucopyranoside binding. 98–100 contacts acetyl-CoA; sequence IVV. 1D-myo-inositol 2-(L-cysteinylamino)-2-deoxy-alpha-D-glucopyranoside-binding residues include Glu203, Lys242, and Glu261. Acetyl-CoA contacts are provided by residues 265 to 267 and 272 to 278; these read VGV and GGAGLGR. Tyr299 provides a ligand contact to 1D-myo-inositol 2-(L-cysteinylamino)-2-deoxy-alpha-D-glucopyranoside. 304-309 is a binding site for acetyl-CoA; sequence NERAVR.

The protein belongs to the acetyltransferase family. MshD subfamily. As to quaternary structure, monomer.

The catalysed reaction is 1D-myo-inositol 2-(L-cysteinylamino)-2-deoxy-alpha-D-glucopyranoside + acetyl-CoA = mycothiol + CoA + H(+). Functionally, catalyzes the transfer of acetyl from acetyl-CoA to desacetylmycothiol (Cys-GlcN-Ins) to form mycothiol. This is Mycothiol acetyltransferase from Frankia alni (strain DSM 45986 / CECT 9034 / ACN14a).